The chain runs to 333 residues: Cysteine protease (333 aa).

Positions Met1–Cys18 are cleaved as a signal peptide. Residues Lys19–Asn108 constitute a propeptide, activation peptide. An N-linked (GlcNAc...) asparagine glycan is attached at Asn93. Disulfide bonds link Cys134–Cys182 and Cys168–Cys214. Residue Cys137 is part of the active site. Active-site residues include His281 and Asn301.

It belongs to the peptidase C1 family. As to quaternary structure, homodimer.

In terms of biological role, cysteine protease. This chain is Cysteine protease, found in Blomia tropicalis (Mite).